The sequence spans 203 residues: Large ribosomal subunit protein uL3 (203 aa).

Belongs to the universal ribosomal protein uL3 family. Part of the 50S ribosomal subunit. Forms a cluster with proteins L14 and L19.

One of the primary rRNA binding proteins, it binds directly near the 3'-end of the 23S rRNA, where it nucleates assembly of the 50S subunit. This is Large ribosomal subunit protein uL3 from Christiangramia forsetii (strain DSM 17595 / CGMCC 1.15422 / KT0803) (Gramella forsetii).